A 101-amino-acid chain; its full sequence is Small ribosomal subunit protein uS14 (101 aa).

A disordered region spans residues 1–22 (MAKVSSIKKNESRKKKSQSLHN). A compositionally biased stretch (basic residues) spans 11–22 (ESRKKKSQSLHN).

It belongs to the universal ribosomal protein uS14 family. As to quaternary structure, part of the 30S ribosomal subunit. Contacts proteins S3 and S10.

Functionally, binds 16S rRNA, required for the assembly of 30S particles and may also be responsible for determining the conformation of the 16S rRNA at the A site. In Rickettsia conorii (strain ATCC VR-613 / Malish 7), this protein is Small ribosomal subunit protein uS14.